We begin with the raw amino-acid sequence, 135 residues long: Methylglyoxal synthase (135 aa).

The region spanning Met-1–Phe-135 is the MGS-like domain. Substrate is bound by residues His-10, Lys-14, Thr-36–Thr-39, and Ser-56–Gly-57. Asp-62 serves as the catalytic Proton donor/acceptor. Residue His-89 participates in substrate binding.

Belongs to the methylglyoxal synthase family.

The enzyme catalyses dihydroxyacetone phosphate = methylglyoxal + phosphate. Catalyzes the formation of methylglyoxal from dihydroxyacetone phosphate. This Pseudoalteromonas atlantica (strain T6c / ATCC BAA-1087) protein is Methylglyoxal synthase.